The chain runs to 692 residues: Pentatricopeptide repeat-containing protein At2g04860 (692 aa).

17 PPR repeats span residues 12–46 (DLSYFHSLLKSCIHGEISSSPITIFRDLLRSSLTP), 47–83 (NHFTMSIFLQATTTSFNSFKLQVEQVQTHLTKSGLDR), 84–114 (FVYVKTSLLNLYLKKGCVTSAQMLFDEMPER), 115–149 (DTVVWNALICGYSRNGYECDAWKLFIVMLQQGFSP), 150–184 (SATTLVNLLPFCGQCGFVSQGRSVHGVAAKSGLEL), 185–215 (DSQVKNALISFYSKCAELGSAEVLFREMKDK), 216–250 (STVSWNTMIGAYSQSGLQEEAITVFKNMFEKNVEI), 280–314 (DISVVTSLVCAYSRCGCLVSAERLYASAKQDSIVG), 316–345 (TSIVSCYAEKGDMDIAVVYFSKTRQLCMKI), 346–380 (DAVALVGILHGCKKSSHIDIGMSLHGYAIKSGLCT), 381–411 (KTLVVNGLITMYSKFDDVETVLFLFEQLQET), 412–447 (PLISWNSVISGCVQSGRASTAFEVFHQMMLTGGLLP), 448–482 (DAITIASLLAGCSQLCCLNLGKELHGYTLRNNFEN), 483–513 (ENFVCTALIDMYAKCGNEVQAESVFKSIKAP), 514–548 (CTATWNSMISGYSLSGLQHRALSCYLEMREKGLKP), 549–584 (DEITFLGVLSACNHGGFVDEGKICFRAMIKEFGISP), and 585–615 (TLQHYALMVGLLGRACLFTEALYLIWKMDIK). Positions 620-692 (VWGALLSACI…YDGYLGVSQI (73 aa)) are type E motif; degenerate.

Belongs to the PPR family. PCMP-E subfamily.

This is Pentatricopeptide repeat-containing protein At2g04860 (PCMP-E74) from Arabidopsis thaliana (Mouse-ear cress).